The following is a 130-amino-acid chain: Small ribosomal subunit protein uS11 (130 aa).

This sequence belongs to the universal ribosomal protein uS11 family. As to quaternary structure, part of the 30S ribosomal subunit. Interacts with proteins S7 and S18. Binds to IF-3.

Functionally, located on the platform of the 30S subunit, it bridges several disparate RNA helices of the 16S rRNA. Forms part of the Shine-Dalgarno cleft in the 70S ribosome. This is Small ribosomal subunit protein uS11 from Caldanaerobacter subterraneus subsp. tengcongensis (strain DSM 15242 / JCM 11007 / NBRC 100824 / MB4) (Thermoanaerobacter tengcongensis).